The following is a 199-amino-acid chain: V-set and transmembrane domain-containing protein 5 (199 aa).

An N-terminal signal peptide occupies residues 1-27 (MRPLRCGERTQGIPLGLLAFWVTAARC). Over 28–146 (LQSQGVSLYI…VSEIRYEDLH (119 aa)) the chain is Extracellular. Residues 35–138 (LYIPQSAINA…QSGTILLRVS (104 aa)) enclose the Ig-like C2-type domain. Asn-43, Asn-87, and Asn-101 each carry an N-linked (GlcNAc...) asparagine glycan. Residues 147–167 (FVAVFFALLAAVAVVLISLMW) form a helical membrane-spanning segment. Residues 168–199 (VCNQCAYKFQRKRRYKLKESTTEEIEMKEVEC) are Cytoplasmic-facing. The segment at 169–185 (CNQCAYKFQRKRRYKLK) is important for CDC42-dependent filopodia induction.

Can homooligomerize through cis interactions within the same cell membrane. Post-translationally, N-glycosylated. In terms of tissue distribution, highly expressed in the central nervous system (CNS), with the highest expression in thalamus, hippocampus, cerebrum, midbrain and spinal cord. Also highly expressed in stomach, kidney and small intestine.

The protein localises to the cell membrane. It is found in the cell projection. The protein resides in the dendrite. Its subcellular location is the axon. In terms of biological role, cell adhesion-like membrane protein of the central nervous system (CNS) which modulates both the position and complexity of central neurons by altering their membrane morphology and dynamics. Involved in the formation of neuronal dendrites and protrusions including dendritic filopodia. In synaptogenesis, regulates synapse formation by altering dendritic spine morphology and actin distribution. Promotes formation of unstable neuronal spines such as thin and branched types. Regulates neuronal morphogenesis and migration during cortical development in the brain. In Mus musculus (Mouse), this protein is V-set and transmembrane domain-containing protein 5.